The sequence spans 290 residues: Syntaxin (290 aa).

A disordered region spans residues 1 to 22; that stretch reads MTKDRLAALKAAQSDDDDNDDV. Over 1-267 the chain is Cytoplasmic; it reads MTKDRLAALK…KYQSKARRKK (267 aa). Residues 32–114 adopt a coiled-coil conformation; the sequence is MEEFFEQVDE…EEHTNKSSAD (83 aa). The t-SNARE coiled-coil homology domain occupies 194–256; the sequence is LADIEARHND…ETAKMDTKKA (63 aa). The helical; Anchor for type IV membrane protein transmembrane segment at 268–288 threads the bilayer; sequence IMILVCLAILIIILVGVIGGT. The Extracellular segment spans residues 289-290; sequence LG.

The protein belongs to the syntaxin family.

The protein resides in the membrane. In terms of biological role, potentially involved in docking of synaptic vesicles at presynaptic active zones. The polypeptide is Syntaxin (Aplysia californica (California sea hare)).